The chain runs to 206 residues: Thymidylate kinase (206 aa).

Residue 11–18 (GIDGAGKT) participates in ATP binding.

This sequence belongs to the thymidylate kinase family.

The enzyme catalyses dTMP + ATP = dTDP + ADP. Phosphorylation of dTMP to form dTDP in both de novo and salvage pathways of dTTP synthesis. In Burkholderia ambifaria (strain MC40-6), this protein is Thymidylate kinase.